We begin with the raw amino-acid sequence, 316 residues long: MNFSSIFSQLKDPHRLIFICAALLCLTPFMSSPMALVLGFTLASLGWVPKDWNIAALTKKLLSYSIIGLGFGINLTAAIEASSHNLGLIIGSIIFTLILGFIVTRALKFDPITGHLIASGTAICGGSAIAAVAPAVNAKADQTATALACVFVLNSVALFLFPALGHLLNMSQYDFGVWSAIAIHDTSSVVGAASAYGDEALKTATTIKLARALWIIPIALVSALIFGGDKRKLNLPYFIGFYCLAIAIAHWLPQFQPLYNTLFMVSKHTLVLCLFLIGAGITVQKMRASGPKPLLLGVILWMAIGVTSLAYILYFQ.

The next 9 helical transmembrane spans lie at 61-80 (LLSY…AAIE), 85-107 (NLGL…TRAL), 114-136 (GHLI…APAV), 146-168 (ALAC…GHLL), 175-197 (FGVW…SAYG), 207-226 (IKLA…ALIF), 233-252 (LNLP…AHWL), 262-281 (LFMV…GAGI), and 293-315 (PLLL…ILYF).

Belongs to the UPF0324 family.

Its subcellular location is the cell membrane. This chain is UPF0324 membrane protein SO_4708, found in Shewanella oneidensis (strain ATCC 700550 / JCM 31522 / CIP 106686 / LMG 19005 / NCIMB 14063 / MR-1).